The chain runs to 470 residues: Cell division protein FtsP (470 aa).

The tat-type signal signal peptide spans 1-27; the sequence is MSLSRRQFIQASGIALCAGAVPLKASA. The 97-residue stretch at 68–164 folds into the Plastocyanin-like domain; the sequence is WGINGRYLGP…NGLAGMWLVE (97 aa).

The protein belongs to the FtsP family. Exported by the Tat system. The position of the signal peptide cleavage has been experimentally proven. Can also be exported by the Sec system.

It localises to the periplasm. In terms of biological role, cell division protein that is required for growth during stress conditions. May be involved in protecting or stabilizing the divisomal assembly under conditions of stress. This chain is Cell division protein FtsP, found in Escherichia coli (strain K12).